The sequence spans 196 residues: uncharacterized protein (196 aa).

A signal peptide spans 1 to 21 (MNGKQCFCFFLFHLFYTGLFA). Cys22 carries N-palmitoyl cysteine lipidation. Cys22 carries S-diacylglycerol cysteine lipidation.

It is found in the cell membrane. This is an uncharacterized protein from Treponema pallidum (strain Nichols).